Consider the following 1040-residue polypeptide: Multidrug resistance protein MdtB (1040 aa).

Transmembrane regions (helical) follow at residues Phe-16–Ile-36, Leu-347–Ala-367, Ile-369–Leu-389, Leu-396–Ile-416, Ile-440–Phe-460, Phe-472–Pro-492, Trp-537–Ile-557, Leu-863–Ile-883, Phe-888–Ala-908, Ile-911–Val-931, Ile-968–Val-988, and Ile-998–Ile-1018.

The protein belongs to the resistance-nodulation-cell division (RND) (TC 2.A.6) family. MdtB subfamily. As to quaternary structure, part of a tripartite efflux system composed of MdtA, MdtB and MdtC. MdtB forms a heteromultimer with MdtC.

Its subcellular location is the cell inner membrane. Its function is as follows. The MdtABC tripartite complex confers resistance against novobiocin and deoxycholate. In Escherichia coli O139:H28 (strain E24377A / ETEC), this protein is Multidrug resistance protein MdtB.